The sequence spans 29 residues: uncharacterized protein (29 aa).

The helical transmembrane segment at 7–27 threads the bilayer; sequence FSLVTTIIVLGLIVAVGLTAA.

Its subcellular location is the cell inner membrane. This is an uncharacterized protein from Escherichia coli O6:K15:H31 (strain 536 / UPEC).